The chain runs to 396 residues: S-adenosylmethionine synthase 3 (396 aa).

Position 12 (Glu12) interacts with Mg(2+). His18 provides a ligand contact to ATP. Glu46 serves as a coordination point for K(+). L-methionine-binding residues include Glu59 and Gln102. ATP-binding positions include 170 to 172 (DGK), 238 to 241 (SGRF), Asp249, 255 to 256 (RK), Ala272, Lys276, and Lys280. Position 249 (Asp249) interacts with L-methionine. Lys280 contributes to the L-methionine binding site.

Belongs to the AdoMet synthase family. In terms of assembly, homotetramer. The cofactor is Mn(2+). Mg(2+) serves as cofactor. It depends on Co(2+) as a cofactor. K(+) is required as a cofactor.

It is found in the cytoplasm. It carries out the reaction L-methionine + ATP + H2O = S-adenosyl-L-methionine + phosphate + diphosphate. It participates in amino-acid biosynthesis; S-adenosyl-L-methionine biosynthesis; S-adenosyl-L-methionine from L-methionine: step 1/1. Its function is as follows. Catalyzes the formation of S-adenosylmethionine from methionine and ATP. The reaction comprises two steps that are both catalyzed by the same enzyme: formation of S-adenosylmethionine (AdoMet) and triphosphate, and subsequent hydrolysis of the triphosphate. The chain is S-adenosylmethionine synthase 3 (METK3) from Oryza sativa subsp. japonica (Rice).